Here is a 309-residue protein sequence, read N- to C-terminus: MTLYDLLELPQTATLQEIKTAYKRLAKRYHPDINKQGADTFVKINNAYAVLSDTTQKAEYDAMLRFSEFEDRVKRLDFSIKWHEQFMEELQFHHNWDFDFIRNREYTQPTPTNNKYSSFLDKDVSLAFYQLYSKGKLDFDLEDTLLRRHSIKQAFLKGKKLNDVLKEQYNYLGWLEAKRYFNIDVEIELTPKEVREGGVVNLPLKIKVISNNYPGQMWYELNKNYSFRLLWDIKNGEVAEFFGKGNRALGWRGDLIVRMRIVDKIKKRLRIFSSHFEQDKTKLWFLVPQDKQDNPNKWVFDYKTHEFIV.

Residues 1–66 form the J domain; the sequence is MTLYDLLELP…KAEYDAMLRF (66 aa).

In Mycoplasma pneumoniae (strain ATCC 29342 / M129 / Subtype 1) (Mycoplasmoides pneumoniae), this protein is DnaJ-like protein MG002 homolog.